A 67-amino-acid chain; its full sequence is MPKMKTKSAAKKRFKITGTGKVLSAAAGKRHGMIKRSNKFIRNARGTMVLAEPDGKKVIKNFLPNGL.

Belongs to the bacterial ribosomal protein bL35 family.

This Mesorhizobium japonicum (strain LMG 29417 / CECT 9101 / MAFF 303099) (Mesorhizobium loti (strain MAFF 303099)) protein is Large ribosomal subunit protein bL35.